The following is a 307-amino-acid chain: Putative oxidoreductase YceM (307 aa).

It belongs to the Gfo/Idh/MocA family.

This is Putative oxidoreductase YceM (yceM) from Escherichia coli (strain K12).